We begin with the raw amino-acid sequence, 444 residues long: D(2) dopamine receptor (444 aa).

Topologically, residues 1-37 (MDPLNLSWYDDDPESRNWSRPFNGSEGKADRPPYNYY) are extracellular. N-linked (GlcNAc...) asparagine glycosylation is found at asparagine 5, asparagine 17, and asparagine 23. The chain crosses the membrane as a helical span at residues 38–60 (AMLLTLLIFVIVFGNVLVCMAVS). Residues 61-70 (REKALQTTTN) are Cytoplasmic-facing. Residues 71–93 (YLIVSLAVADLLVATLVMPWVVY) traverse the membrane as a helical segment. Over 94–108 (LEVVGEWKFSRIHCD) the chain is Extracellular. A disulfide bond links cysteine 107 and cysteine 182. Residues 109–130 (IFVTLDVMMCTASILNLCAISI) form a helical membrane-spanning segment. At 131–151 (DRYTAVAMPMLYNTRYSSKRR) the chain is on the cytoplasmic side. The helical transmembrane segment at 152 to 172 (VTVMIAIVWVLSFTISCPMLF) threads the bilayer. Residues 173-188 (GLNNTDQNECIIANPA) are Extracellular-facing. A helical membrane pass occupies residues 189-213 (FVVYSSIVSFYVPFIVTLLVYIKIY). An interaction with PPP1R9B region spans residues 211–374 (KIYIVLRRRR…SQQKEKKATQ (164 aa)). Residues 214 to 374 (IVLRRRRKRV…SQQKEKKATQ (161 aa)) lie on the Cytoplasmic side of the membrane. A disordered region spans residues 281–332 (MEMLSSTSPPERTRYSPIPPSHHQLTLPDPSHHGLHSTPDSPAKPEKNGHAK). A helical membrane pass occupies residues 375 to 396 (MLAIVLGVFIICWLPFFITHIL). Residues 397 to 410 (NIHCDCNIPPVLYS) lie on the Extracellular side of the membrane. A disulfide bond links cysteine 400 and cysteine 402. Residues 411 to 432 (AFTWLGYVNSAVNPIIYTTFNI) traverse the membrane as a helical segment. Residues 433-444 (EFRKAFLKILHC) are Cytoplasmic-facing. Cysteine 444 carries the S-palmitoyl cysteine lipid modification.

It belongs to the G-protein coupled receptor 1 family. As to quaternary structure, forms homo- and heterooligomers with DRD4. The interaction with DRD4 may modulate agonist-induced downstream signaling. Interacts with CADPS and CADPS2. Interacts with GPRASP1, PPP1R9B and CLIC6. Interacts with ARRB2. Interacts with HTR2A. Interacts with DRD1. Interacts with KCNA2. Post-translationally, palmitoylated. Palmitoylation which is required for proper localization to the plasma membrane and stability of the receptor could be carried on by ZDHHC4, ZDHHC3 and ZDHHC8.

It is found in the cell membrane. It localises to the golgi apparatus membrane. In terms of biological role, dopamine receptor whose activity is mediated by G proteins which inhibit adenylyl cyclase. Positively regulates postnatal regression of retinal hyaloid vessels via suppression of VEGFR2/KDR activity, downstream of OPN5. The protein is D(2) dopamine receptor (DRD2) of Bos taurus (Bovine).